The following is a 412-amino-acid chain: Argininosuccinate synthase (412 aa).

Residues 16–24 and A44 each bind ATP; that span reads AYSGGLDTS. 2 residues coordinate L-citrulline: Y96 and S101. Residue G126 coordinates ATP. L-aspartate contacts are provided by T128, N132, and D133. N132 is an L-citrulline binding site. 5 residues coordinate L-citrulline: R136, S185, S194, E270, and Y282.

Belongs to the argininosuccinate synthase family. Type 1 subfamily. Homotetramer.

The protein localises to the cytoplasm. It catalyses the reaction L-citrulline + L-aspartate + ATP = 2-(N(omega)-L-arginino)succinate + AMP + diphosphate + H(+). The protein operates within amino-acid biosynthesis; L-arginine biosynthesis; L-arginine from L-ornithine and carbamoyl phosphate: step 2/3. In Shewanella baltica (strain OS195), this protein is Argininosuccinate synthase.